A 100-amino-acid polypeptide reads, in one-letter code: Putative pterin-4-alpha-carbinolamine dehydratase (100 aa).

This sequence belongs to the pterin-4-alpha-carbinolamine dehydratase family.

It catalyses the reaction (4aS,6R)-4a-hydroxy-L-erythro-5,6,7,8-tetrahydrobiopterin = (6R)-L-erythro-6,7-dihydrobiopterin + H2O. The chain is Putative pterin-4-alpha-carbinolamine dehydratase from Allorhizobium ampelinum (strain ATCC BAA-846 / DSM 112012 / S4) (Agrobacterium vitis (strain S4)).